Reading from the N-terminus, the 30-residue chain is Cyclotide cter-G (30 aa).

The segment at residues 1-30 (GLPCGESCVFIPCITTVVGCSCKNKVCYNN) is a cross-link (cyclopeptide (Gly-Asn)). Disulfide bonds link Cys4-Cys20, Cys8-Cys22, and Cys13-Cys27.

In terms of processing, contains 3 disulfide bonds. This is a cyclic peptide.

Its function is as follows. Probably participates in a plant defense mechanism. This chain is Cyclotide cter-G, found in Clitoria ternatea (Butterfly pea).